Consider the following 1070-residue polypeptide: DNA-directed RNA polymerase subunit beta (1070 aa).

This sequence belongs to the RNA polymerase beta chain family. In plastids the minimal PEP RNA polymerase catalytic core is composed of four subunits: alpha, beta, beta', and beta''. When a (nuclear-encoded) sigma factor is associated with the core the holoenzyme is formed, which can initiate transcription.

It is found in the plastid. The protein resides in the chloroplast. It catalyses the reaction RNA(n) + a ribonucleoside 5'-triphosphate = RNA(n+1) + diphosphate. Its function is as follows. DNA-dependent RNA polymerase catalyzes the transcription of DNA into RNA using the four ribonucleoside triphosphates as substrates. This chain is DNA-directed RNA polymerase subunit beta, found in Lotus japonicus (Lotus corniculatus var. japonicus).